A 234-amino-acid chain; its full sequence is 1-(5-phosphoribosyl)-5-[(5-phosphoribosylamino)methylideneamino] imidazole-4-carboxamide isomerase (234 aa).

Aspartate 9 functions as the Proton acceptor in the catalytic mechanism. Residue aspartate 131 is the Proton donor of the active site.

The protein belongs to the HisA/HisF family.

The protein localises to the cytoplasm. The catalysed reaction is 1-(5-phospho-beta-D-ribosyl)-5-[(5-phospho-beta-D-ribosylamino)methylideneamino]imidazole-4-carboxamide = 5-[(5-phospho-1-deoxy-D-ribulos-1-ylimino)methylamino]-1-(5-phospho-beta-D-ribosyl)imidazole-4-carboxamide. Its pathway is amino-acid biosynthesis; L-histidine biosynthesis; L-histidine from 5-phospho-alpha-D-ribose 1-diphosphate: step 4/9. The sequence is that of 1-(5-phosphoribosyl)-5-[(5-phosphoribosylamino)methylideneamino] imidazole-4-carboxamide isomerase from Staphylococcus aureus (strain NCTC 8325 / PS 47).